The following is a 41-amino-acid chain: MKIRCFCIVLIVSGALLTEVNNNRSLSGDNLLVVNNLQSSK.

At 1–17 (MKIRCFCIVLIVSGALL) the chain is embedded in the membrane.

Belongs to the TimP toxin family.

It localises to the cell inner membrane. Its function is as follows. Putative toxic component of a potential type I toxin-antitoxin (TA) system. Neutralized by sRNA antitoxin TimR which binds to the 5' UTR of timP mRNA and inhibits translation. The antitoxin gene is encoded immediately upstream and transcribed divergently from the toxin gene; antitoxin RNA is less stable than timP mRNA. This chain is Putative toxic protein TimP, found in Escherichia coli (strain K12).